Reading from the N-terminus, the 337-residue chain is UDP-3-O-acylglucosamine N-acyltransferase 1 (337 aa).

The active-site Proton acceptor is H238.

It belongs to the transferase hexapeptide repeat family. LpxD subfamily. Homotrimer.

The catalysed reaction is a UDP-3-O-[(3R)-3-hydroxyacyl]-alpha-D-glucosamine + a (3R)-hydroxyacyl-[ACP] = a UDP-2-N,3-O-bis[(3R)-3-hydroxyacyl]-alpha-D-glucosamine + holo-[ACP] + H(+). The protein operates within bacterial outer membrane biogenesis; LPS lipid A biosynthesis. Catalyzes the N-acylation of UDP-3-O-acylglucosamine using 3-hydroxyacyl-ACP as the acyl donor. Is involved in the biosynthesis of lipid A, a phosphorylated glycolipid that anchors the lipopolysaccharide to the outer membrane of the cell. This Koribacter versatilis (strain Ellin345) protein is UDP-3-O-acylglucosamine N-acyltransferase 1.